A 103-amino-acid chain; its full sequence is Pyrimidine/purine nucleoside phosphorylase (103 aa).

It belongs to the nucleoside phosphorylase PpnP family.

It catalyses the reaction a purine D-ribonucleoside + phosphate = a purine nucleobase + alpha-D-ribose 1-phosphate. The catalysed reaction is adenosine + phosphate = alpha-D-ribose 1-phosphate + adenine. The enzyme catalyses cytidine + phosphate = cytosine + alpha-D-ribose 1-phosphate. It carries out the reaction guanosine + phosphate = alpha-D-ribose 1-phosphate + guanine. It catalyses the reaction inosine + phosphate = alpha-D-ribose 1-phosphate + hypoxanthine. The catalysed reaction is thymidine + phosphate = 2-deoxy-alpha-D-ribose 1-phosphate + thymine. The enzyme catalyses uridine + phosphate = alpha-D-ribose 1-phosphate + uracil. It carries out the reaction xanthosine + phosphate = alpha-D-ribose 1-phosphate + xanthine. Functionally, catalyzes the phosphorolysis of diverse nucleosides, yielding D-ribose 1-phosphate and the respective free bases. Can use uridine, adenosine, guanosine, cytidine, thymidine, inosine and xanthosine as substrates. Also catalyzes the reverse reactions. This chain is Pyrimidine/purine nucleoside phosphorylase, found in Sulfurimonas denitrificans (strain ATCC 33889 / DSM 1251) (Thiomicrospira denitrificans (strain ATCC 33889 / DSM 1251)).